A 125-amino-acid chain; its full sequence is Phosphoribosyl-AMP cyclohydrolase (125 aa).

Mg(2+) is bound at residue Asp-74. Cys-75 serves as a coordination point for Zn(2+). Residues Asp-76 and Asp-78 each coordinate Mg(2+). Zn(2+) contacts are provided by Cys-92 and Cys-99.

It belongs to the PRA-CH family. As to quaternary structure, homodimer. It depends on Mg(2+) as a cofactor. Zn(2+) is required as a cofactor.

The protein localises to the cytoplasm. The catalysed reaction is 1-(5-phospho-beta-D-ribosyl)-5'-AMP + H2O = 1-(5-phospho-beta-D-ribosyl)-5-[(5-phospho-beta-D-ribosylamino)methylideneamino]imidazole-4-carboxamide. The protein operates within amino-acid biosynthesis; L-histidine biosynthesis; L-histidine from 5-phospho-alpha-D-ribose 1-diphosphate: step 3/9. Functionally, catalyzes the hydrolysis of the adenine ring of phosphoribosyl-AMP. This Geobacter sp. (strain M21) protein is Phosphoribosyl-AMP cyclohydrolase.